A 940-amino-acid chain; its full sequence is Receptor-like protein 9b (940 aa).

Positions 1 to 28 are cleaved as a signal peptide; that stretch reads MLMMFSPAFVMVMDLMVLVMMIMMMVSS. The Extracellular segment spans residues 29-895; sequence LDAHGHISCI…GDEETTIDME (867 aa). N-linked (GlcNAc...) asparagine glycosylation is found at asparagine 53, asparagine 63, asparagine 66, asparagine 101, asparagine 115, and asparagine 151. 16 LRR repeats span residues 108–136, 137–163, 165–185, 186–211, 213–232, 233–255, 257–279, 281–304, 306–330, 331–354, 355–378, 379–402, 403–426, 427–450, 452–475, and 477–502; these read FGEL…SFER, LKNL…TASS, KTLI…ELIN, LRNL…NFHN, QGLD…LCQL, KNLR…CFDS, TQLQ…LIRN, DSVE…LIAN, SKLK…SLQP, KFQL…IQHQ, KDLH…LLEK, YPNL…RLLN, HTLQ…IGKV, LPNI…SFGE, KDIK…FLIG, and SSLH…NFGS. Asparagine 270 and asparagine 304 each carry an N-linked (GlcNAc...) asparagine glycan. N-linked (GlcNAc...) asparagine glycans are attached at residues asparagine 361, asparagine 389, and asparagine 402. 2 N-linked (GlcNAc...) asparagine glycosylation sites follow: asparagine 434 and asparagine 463. Residues 503–522 form an LRR 17; degenerate repeat; sequence LVVLIANNNLFTGIADGLRN. 11 LRR repeats span residues 523–546, 547–570, 571–593, 595–615, 616–639, 641–662, 663–686, 752–776, 777–799, 801–824, and 826–849; these read VQSL…WFGG, FFFA…LFSK, PTFK…HFTG, DMSL…STLI, KDVL…VKNE, ILSL…LCGL, RSIR…LNNV, FNFM…LGDL, QRIR…SFSN, TDIE…LSKL, and YMVV…KFST. An N-linked (GlcNAc...) asparagine glycan is attached at asparagine 685. 2 N-linked (GlcNAc...) asparagine glycosylation sites follow: asparagine 783 and asparagine 799. N-linked (GlcNAc...) asparagine glycosylation is found at asparagine 831, asparagine 836, asparagine 867, and asparagine 873. A helical membrane pass occupies residues 896-916; the sequence is IFYWSLAATYGVTWITFIVFL. The Cytoplasmic segment spans residues 917-940; the sequence is CFDSPWRRVWFHFVDAFISLFKCV.

This sequence belongs to the RLP family.

It is found in the cell membrane. In Arabidopsis thaliana (Mouse-ear cress), this protein is Receptor-like protein 9b.